The sequence spans 434 residues: MAQFYSAKRRVTTRQIITVTVNDLDPFGQGVARHQGKALFVSGVLPQEQAEVVLVEDKKQYARAQVKRRLTDSPQRQAPRCPHFGVCGGCQQQHASVALQQQSKRAALARLMKREVDEVIAGVPWGYRRRARLSLNYQPKTQQLQMGFRQANAKAIVDVVQCPVLAPQLEALLPAVRECLSALSALRHLGHVELVQADNGPLMVLRHTAALPAGDREKLERFSQTHGLSLYLAPQSEILEHIHGEAPWYTSDGLRLVFSPRDFIQVNDGVNQQMVRTALEWLDLQPEDRVLDLFCGMGNFTLPLATRAAHVVGVEGVPALVEKGRENAALNGLSNVTFFHENLEEDVTRQAWAKHGFDKVLLDPARAGAPGVMPHIIKLAPRRVVYVSCNPATLARDSETLLQAGYQIQRLAMLDMFPHTGHLESMVLFERRLT.

The TRAM domain occupies 10 to 68 (RVTTRQIITVTVNDLDPFGQGVARHQGKALFVSGVLPQEQAEVVLVEDKKQYARAQVKR). Residues Cys-81, Cys-87, Cys-90, and Cys-162 each coordinate [4Fe-4S] cluster. The S-adenosyl-L-methionine site is built by Gln-265, Phe-294, Asn-299, Glu-315, Asn-342, and Asp-363. Residue Cys-389 is the Nucleophile of the active site.

This sequence belongs to the class I-like SAM-binding methyltransferase superfamily. RNA M5U methyltransferase family. RlmD subfamily.

The enzyme catalyses uridine(1939) in 23S rRNA + S-adenosyl-L-methionine = 5-methyluridine(1939) in 23S rRNA + S-adenosyl-L-homocysteine + H(+). Catalyzes the formation of 5-methyl-uridine at position 1939 (m5U1939) in 23S rRNA. The polypeptide is 23S rRNA (uracil(1939)-C(5))-methyltransferase RlmD (Klebsiella pneumoniae (strain 342)).